Here is a 102-residue protein sequence, read N- to C-terminus: NADH-quinone oxidoreductase subunit K (102 aa).

Helical transmembrane passes span 6-26, 30-50, and 62-82; these read FEHA…ALLI, LIVM…AFIA, and VMFL…LGLG.

The protein belongs to the complex I subunit 4L family. In terms of assembly, NDH-1 is composed of 14 different subunits. Subunits NuoA, H, J, K, L, M, N constitute the membrane sector of the complex.

The protein resides in the cell inner membrane. The enzyme catalyses a quinone + NADH + 5 H(+)(in) = a quinol + NAD(+) + 4 H(+)(out). Its function is as follows. NDH-1 shuttles electrons from NADH, via FMN and iron-sulfur (Fe-S) centers, to quinones in the respiratory chain. The immediate electron acceptor for the enzyme in this species is believed to be ubiquinone. Couples the redox reaction to proton translocation (for every two electrons transferred, four hydrogen ions are translocated across the cytoplasmic membrane), and thus conserves the redox energy in a proton gradient. This is NADH-quinone oxidoreductase subunit K from Methylococcus capsulatus (strain ATCC 33009 / NCIMB 11132 / Bath).